The following is an 85-amino-acid chain: U4-theraphotoxin-Hhn1a (85 aa).

The N-terminal stretch at 1-22 (MKVTLIAILTCAAVLVLHTTAA) is a signal peptide. The propeptide occupies 23–48 (EELEAESQLMEVGMPDTELEAVDEER). 3 disulfides stabilise this stretch: Cys52-Cys66, Cys56-Cys77, and Cys71-Cys82.

This sequence belongs to the neurotoxin 12 (Hwtx-2) family. 02 (Hwtx-2) subfamily. Monomer. Expressed by the venom gland.

Its subcellular location is the secreted. Its function is as follows. Neurotoxin active on both insects and mammals. The sequence is that of U4-theraphotoxin-Hhn1a from Cyriopagopus hainanus (Chinese bird spider).